A 376-amino-acid chain; its full sequence is N-acetyldiaminopimelate deacetylase (376 aa).

Aspartate 69 is an active-site residue. The active-site Proton acceptor is the glutamate 128.

Belongs to the peptidase M20A family. N-acetyldiaminopimelate deacetylase subfamily.

The catalysed reaction is N-acetyl-(2S,6S)-2,6-diaminopimelate + H2O = (2S,6S)-2,6-diaminopimelate + acetate. The protein operates within amino-acid biosynthesis; L-lysine biosynthesis via DAP pathway; LL-2,6-diaminopimelate from (S)-tetrahydrodipicolinate (acetylase route): step 3/3. Catalyzes the conversion of N-acetyl-diaminopimelate to diaminopimelate and acetate. This Streptococcus pneumoniae (strain P1031) protein is N-acetyldiaminopimelate deacetylase.